The following is a 199-amino-acid chain: Probable GTP-binding protein EngB (199 aa).

In terms of domain architecture, EngB-type G spans Asn22 to Gly196. GTP is bound by residues Gly30 to Ser37, Gly57 to Leu61, Asp82 to Gly85, Thr152 to Asp155, and Val175 to Asn177. Residues Ser37 and Thr59 each coordinate Mg(2+).

Belongs to the TRAFAC class TrmE-Era-EngA-EngB-Septin-like GTPase superfamily. EngB GTPase family. Requires Mg(2+) as cofactor.

In terms of biological role, necessary for normal cell division and for the maintenance of normal septation. This chain is Probable GTP-binding protein EngB, found in Campylobacter jejuni subsp. doylei (strain ATCC BAA-1458 / RM4099 / 269.97).